A 483-amino-acid chain; its full sequence is V-type proton ATPase subunit H (483 aa).

Residue S483 is modified to Phosphoserine.

Belongs to the V-ATPase H subunit family. V-ATPase is a heteromultimeric enzyme made up of two complexes: the ATP-hydrolytic V1 complex and the proton translocation V0 complex. The V1 complex consists of three catalytic AB heterodimers that form a heterohexamer, three peripheral stalks each consisting of EG heterodimers, one central rotor including subunits D and F, and the regulatory subunits C and H. The proton translocation complex V0 consists of the proton transport subunit a, a ring of proteolipid subunits c9c'', rotary subunit d, subunits e and f, and the accessory subunits ATP6AP1/Ac45 and ATP6AP2/PRR. Interacts with AP2M1. Expressed in brain (at protein level).

It is found in the cytoplasmic vesicle. Its subcellular location is the clathrin-coated vesicle membrane. Its function is as follows. Subunit of the V1 complex of vacuolar(H+)-ATPase (V-ATPase), a multisubunit enzyme composed of a peripheral complex (V1) that hydrolyzes ATP and a membrane integral complex (V0) that translocates protons. V-ATPase is responsible for acidifying and maintaining the pH of intracellular compartments and in some cell types, is targeted to the plasma membrane, where it is responsible for acidifying the extracellular environment. Subunit H is essential for V-ATPase activity, but not for the assembly of the complex. Involved in the endocytosis mediated by clathrin-coated pits, required for the formation of endosomes. This is V-type proton ATPase subunit H (ATP6V1H) from Bos taurus (Bovine).